Here is a 57-residue protein sequence, read N- to C-terminus: Conotoxin Cal6.39 (57 aa).

An N-terminal signal peptide occupies residues 1-18 (MSGTTVLLLTCLFLVTMA). 3 cysteine pairs are disulfide-bonded: Cys-22–Cys-36, Cys-29–Cys-46, and Cys-35–Cys-52.

Expressed by the venom duct.

Its subcellular location is the secreted. Probable neurotoxin. This Californiconus californicus (California cone) protein is Conotoxin Cal6.39.